We begin with the raw amino-acid sequence, 317 residues long: Sulfate adenylyltransferase subunit 2 (317 aa).

Disordered regions lie at residues 1–21 (MPDS…APLD) and 298–317 (RAID…EGYF).

This sequence belongs to the PAPS reductase family. CysD subfamily. Heterodimer composed of CysD, the smaller subunit, and CysN.

The enzyme catalyses sulfate + ATP + H(+) = adenosine 5'-phosphosulfate + diphosphate. It participates in sulfur metabolism; hydrogen sulfide biosynthesis; sulfite from sulfate: step 1/3. Functionally, with CysN forms the ATP sulfurylase (ATPS) that catalyzes the adenylation of sulfate producing adenosine 5'-phosphosulfate (APS) and diphosphate, the first enzymatic step in sulfur assimilation pathway. APS synthesis involves the formation of a high-energy phosphoric-sulfuric acid anhydride bond driven by GTP hydrolysis by CysN coupled to ATP hydrolysis by CysD. The sequence is that of Sulfate adenylyltransferase subunit 2 from Rhizobium etli (strain CIAT 652).